Consider the following 266-residue polypeptide: Ribonuclease 3 (266 aa).

The disordered stretch occupies residues 1-35 (MMDESADIKPVPTSEDVAAPSGTEPVAPAPKKKRA). Residues 43–171 (MAAIEQRLGH…VIGAVYLDGG (129 aa)) enclose the RNase III domain. Glu84 provides a ligand contact to Mg(2+). Asp88 is an active-site residue. Residues Asp157 and Glu160 each contribute to the Mg(2+) site. The active site involves Glu160. A DRBM domain is found at 196–265 (DPKTVLQEWA…ASAMIVREGV (70 aa)).

Belongs to the ribonuclease III family. Homodimer. Mg(2+) is required as a cofactor.

It is found in the cytoplasm. The catalysed reaction is Endonucleolytic cleavage to 5'-phosphomonoester.. In terms of biological role, digests double-stranded RNA. Involved in the processing of primary rRNA transcript to yield the immediate precursors to the large and small rRNAs (23S and 16S). Processes some mRNAs, and tRNAs when they are encoded in the rRNA operon. Processes pre-crRNA and tracrRNA of type II CRISPR loci if present in the organism. In Nitrobacter winogradskyi (strain ATCC 25391 / DSM 10237 / CIP 104748 / NCIMB 11846 / Nb-255), this protein is Ribonuclease 3.